An 86-amino-acid polypeptide reads, in one-letter code: Sec-independent protein translocase protein TatA (86 aa).

The helical transmembrane segment at 3–23 (IFGVGLPEVTVILILALLIFG) threads the bilayer. The segment at 56 to 86 (MNEEDESPKSIESNQTNEINQEKIDSENSKK) is disordered. A compositionally biased stretch (polar residues) spans 65-74 (SIESNQTNEI). Residues 75 to 86 (NQEKIDSENSKK) show a composition bias toward basic and acidic residues.

It belongs to the TatA/E family. Forms a complex with TatC.

Its subcellular location is the cell inner membrane. Its function is as follows. Part of the twin-arginine translocation (Tat) system that transports large folded proteins containing a characteristic twin-arginine motif in their signal peptide across membranes. TatA could form the protein-conducting channel of the Tat system. The chain is Sec-independent protein translocase protein TatA from Prochlorococcus marinus (strain MIT 9215).